Consider the following 33-residue polypeptide: Photosystem II reaction center protein Psb30 (33 aa).

A helical transmembrane segment spans residues 5-25 (VIAQLTVLSLIVLSGPLVIIL).

The protein belongs to the Psb30/Ycf12 family. In terms of assembly, PSII is composed of 1 copy each of membrane proteins PsbA, PsbB, PsbC, PsbD, PsbE, PsbF, PsbH, PsbI, PsbJ, PsbK, PsbL, PsbM, PsbT, PsbX, PsbY, PsbZ, Psb30/Ycf12, peripheral proteins of the oxygen-evolving complex and a large number of cofactors. It forms dimeric complexes.

It localises to the plastid. Its subcellular location is the chloroplast thylakoid membrane. A core subunit of photosystem II (PSII), probably helps stabilize the reaction center. This Chlorokybus atmophyticus (Soil alga) protein is Photosystem II reaction center protein Psb30.